Reading from the N-terminus, the 785-residue chain is Toll-like receptor 2 (785 aa).

A signal peptide spans 1-17; the sequence is MSRVLWTLWVLGAVTNL. Over 18-589 the chain is Extracellular; the sequence is SKEEAPDQSS…RLSVSECHRT (572 aa). Cysteine 31 and cysteine 37 form a disulfide bridge. LRR repeat units follow at residues 54–77, 78–101, 102–125, 126–150, 151–175, 176–199, 200–223, 224–250, 251–278, 279–308, 309–337, 338–361, 362–388, 389–414, 415–437, 438–457, 458–478, 479–500, and 501–524; these read AVRS…RDCV, NLKA…LSLW, SLEH…RPLS, SLKF…SQLT, NLRI…AGLT, FLEE…KSIQ, NISY…DLSS, SLKH…ETHT, LVKK…NYVS, GVLE…KNIG, QIET…SLTE, DVKR…QHLK, SLEY…DAWP, SLQT…LTLK, NLTN…QWPE, KMKY…GCIP, KTLE…LNLP, QLKE…SLLP, and MLLV…DSFH. An N-linked (GlcNAc...) asparagine glycan is attached at asparagine 115. N-linked (GlcNAc...) asparagine glycans are attached at residues asparagine 200 and asparagine 246. Cysteine 354 and cysteine 383 are disulfide-bonded. N-linked (GlcNAc...) asparagine glycosylation is found at asparagine 415 and asparagine 443. Cysteine 433 and cysteine 455 are disulfide-bonded. The region spanning 525–579 is the LRRCT domain; sequence TLKTLEAGGNNFICSCEFLSFTQEQQALAKVLIDWPANYLCDSPSHVRGQQVQDV. The chain crosses the membrane as a helical span at residues 590–610; sequence ALVSGMCCALFLLILLTEVLC. Over 611–785 the chain is Cytoplasmic; sequence HRFHGLWYMR…WLNLRTAIKS (175 aa). Residues 640–783 enclose the TIR domain; it reads VCYDAFVSYS…GFWLNLRTAI (144 aa). Lysine 755 participates in a covalent cross-link: Glycyl lysine isopeptide (Lys-Gly) (interchain with G-Cter in ubiquitin). The short motif at 762 to 779 is the ATG16L1-binding motif element; that stretch reads YLEWPTDDAQQEGFWLNL.

It belongs to the Toll-like receptor family. As to quaternary structure, interacts with LY96, TLR1 and TLR6 (via extracellular domain). TLR2 seems to exist in heterodimers with either TLR1 or TLR6 before stimulation by the ligand. The heterodimers form bigger oligomers in response to their corresponding ligands as well as further heterotypic associations with other receptors such as CD14 and/or CD36. Binds MYD88 (via TIR domain). Interacts with TICAM1. Interacts with CNPY3. Interacts with ATG16L1. Interacts with PPP1R11. Interacts with TICAM2. Interacts with TIRAP. Ubiquitinated at Lys-755 by PPP1R11, leading to its degradation. Deubiquitinated by USP2. Post-translationally, glycosylation of Asn-443 is critical for secretion of the N-terminal ectodomain of TLR2.

It is found in the membrane. The protein resides in the cytoplasmic vesicle. It localises to the phagosome membrane. Its subcellular location is the membrane raft. Cooperates with LY96 to mediate the innate immune response to bacterial lipoproteins and other microbial cell wall components. Cooperates with TLR1 or TLR6 to mediate the innate immune response to bacterial lipoproteins or lipopeptides. Acts via MYD88 and TRAF6, leading to NF-kappa-B activation, cytokine secretion and the inflammatory response. May also promote apoptosis in response to lipoproteins. Forms activation clusters composed of several receptors depending on the ligand, these clusters trigger signaling from the cell surface and subsequently are targeted to the Golgi in a lipid-raft dependent pathway. Forms the cluster TLR2:TLR6:CD14:CD36 in response to diacylated lipopeptides and TLR2:TLR1:CD14 in response to triacylated lipopeptides. This is Toll-like receptor 2 (TLR2) from Canis lupus familiaris (Dog).